The chain runs to 112 residues: Putative pterin-4-alpha-carbinolamine dehydratase (112 aa).

Belongs to the pterin-4-alpha-carbinolamine dehydratase family.

It carries out the reaction (4aS,6R)-4a-hydroxy-L-erythro-5,6,7,8-tetrahydrobiopterin = (6R)-L-erythro-6,7-dihydrobiopterin + H2O. The sequence is that of Putative pterin-4-alpha-carbinolamine dehydratase from Shewanella sp. (strain MR-4).